Here is a 561-residue protein sequence, read N- to C-terminus: Arginine--tRNA ligase (561 aa).

Positions 135-145 (ANPTGLLHMGN) match the 'HIGH' region motif.

This sequence belongs to the class-I aminoacyl-tRNA synthetase family. As to quaternary structure, monomer.

It is found in the cytoplasm. It carries out the reaction tRNA(Arg) + L-arginine + ATP = L-arginyl-tRNA(Arg) + AMP + diphosphate. The protein is Arginine--tRNA ligase of Desulfitobacterium hafniense (strain DSM 10664 / DCB-2).